Consider the following 975-residue polypeptide: MDLNSASTVVLQVLTQATSQDTAVLKPAEEQLKQWETQPGFYSVLLNIFTNHTLDINVRWLAVLYFKHGIDRYWRRVAPHALSEEEKTTLRAGLITNFNEPINQIATQIAVLIAKVARLDCPRQWPELIPTLIESVKVQDDLRQHRALLTFYHVTKTLASKRLAADRKLFYDLASGIYNFACSLWNHHTDTFLQEVSSGNEAAILSSLERTLLSLKVLRKLTVNGFVEPHKNMEVMGFLHGIFERLKQFLECSRSIGTDNVCRDRLEKTIILFTKVLLDFLDQHPFSFTPLIQRSLEFSVSYVFTEVGEGVTFERFIVQCMNLIKMIVKNYAYKPSKNFEDSSPETLEAHKIKMAFFTYPTLTEICRRLVSHYFLLTEEELTMWEEDPEGFTVEETGGDSWKYSLRPCTEVLFIDIFHEYNQTLTPVLLEMMQTLQGPTNVEDMNALLIKDAVYNAVGLAAYELFDSVDFDQWFKNQLLPELQVIHNRYKPLRRRVIWLIGQWISVKFKSDLRPMLYEAICNLLQDQDLVVRIETATTLKLTVDDFEFRTDQFLPYLETMFTLLFQLLQQVTECDTKMHVLHVLSCVIERVNMQIRPYVGCLVQYLPLLWKQSEEHNMLRCAILTTLIHLVQGLGADSKNLYPFLLPVIQLSTDVSQPPHVYLLEDGLELWLVTLENSPCITPELLRIFQNMSPLLELSSENLRTCFKIINGYIFLSSTEFLQTYAVGLCQSFCELLKEITTEGQVQVLKVVENALKVNPILGPQMFQPILPYVFKGIIEGERYPVVMSTYLGVMGRVLLQNTSFFSSLLNEMAHKFNQEMDQLLGNMIEMWVDRMDNITQPERRKLSALALLSLLPSDNSVIQDKFCGIINISVEGLHDVMTEDPETGTYKDCMLMSHLEEPKVTEDEEPPTEQDKRKKMLALKDPVHTVSLQQFIYEKLKAQQEMLGEQGFQSLMETVDTEIVTQLQEFLQGF.

Met1 is subject to N-acetylmethionine. An Importin N-terminal domain is found at 28–100 (AEEQLKQWET…RAGLITNFNE (73 aa)). HEAT repeat units follow at residues 123–160 (RQWP…TLAS), 209–248 (ERTL…RLKQ), 318–356 (VQCM…KMAF), 422–459 (QTLT…AVGL), 473–509 (WFKN…VKFK), 511–548 (DLRP…DFEF), 555–593 (PYLE…RVNM), 600–636 (GCLV…GLGA), 640–677 (NLYP…TLEN), 683–720 (PELL…SSTE), 743–764 (EGQV…ILGP), 765–804 (QMFQ…QNTS), 819–849 (QEMD…KLSA), 850–887 (LALL…EDPE), and 957–974 (METV…FLQG). Residue Ser343 is modified to Phosphoserine.

The protein belongs to the importin beta family. Interacts with UBE2E3 and RPL12.

Its subcellular location is the cytoplasm. It is found in the nucleus. In terms of biological role, functions in nuclear protein import as nuclear transport receptor. Serves as receptor for nuclear localization signals (NLS) in cargo substrates. Is thought to mediate docking of the importin/substrate complex to the nuclear pore complex (NPC) through binding to nucleoporin and the complex is subsequently translocated through the pore by an energy requiring, Ran-dependent mechanism. At the nucleoplasmic side of the NPC, Ran binds to the importin, the importin/substrate complex dissociates and importin is re-exported from the nucleus to the cytoplasm where GTP hydrolysis releases Ran. The directionality of nuclear import is thought to be conferred by an asymmetric distribution of the GTP- and GDP-bound forms of Ran between the cytoplasm and nucleus. Mediates the nuclear import of UBE2E3, and of RPL12. The polypeptide is Importin-11 (IPO11) (Homo sapiens (Human)).